The chain runs to 224 residues: Response regulator protein GraR (224 aa).

Positions 2–115 (QILLVEDDNT…VLIAKLQAIY (114 aa)) constitute a Response regulatory domain. At aspartate 51 the chain carries 4-aspartylphosphate. The segment at residues 126–224 (KRTLTWQDAV…KVGKGYMAHE (99 aa)) is a DNA-binding region (ompR/PhoB-type). 3 positions are modified to phosphothreonine: threonine 128, threonine 130, and threonine 149.

In terms of assembly, interacts with GraX. Phosphorylated by GraS. Phosphorylated by Stk1; phosphorylation increases the DNA-binding activity of GraR.

The protein localises to the cytoplasm. Functionally, member of the two-component regulatory system GraR/GraS involved in resistance against cationic antimicrobial peptides (CAMPs). Upon phosphorylation by GraS, functions as a transcription regulator by direct binding to promoter regions of target genes such as adhesins, exoproteins, transporters, toxins, and proteins involved in cell wall synthesis. Down-regulates the expression of many genes involved in RNA and amino acid synthesis or glycolysis. The sequence is that of Response regulator protein GraR (graR) from Staphylococcus aureus (strain USA300).